The sequence spans 331 residues: Olfactory receptor 7D11 (331 aa).

At 1 to 25 (MEIENHTLITKFLILGLSDDPELQP) the chain is on the extracellular side. N-linked (GlcNAc...) asparagine glycosylation occurs at Asn5. A helical transmembrane segment spans residues 26–46 (ILFGLFLSMYLVTLLGNLLII). The Cytoplasmic segment spans residues 47 to 57 (LAVSSDSHLHK). Residues 58–78 (PMYFLLSNLSFIDICFISTTI) form a helical membrane-spanning segment. Over 79–97 (PKMLVNMQSQIKDISYIEC) the chain is Extracellular. Cys97 and Cys179 are oxidised to a cystine. The helical transmembrane segment at 98–118 (LTQVFFFNIFAGMDNFLLTLM) threads the bilayer. Residues 119-142 (AYDRFVAICHPLNYTVIMNPRLCA) lie on the Cytoplasmic side of the membrane. A helical membrane pass occupies residues 143–163 (LLILMFWIIMFWVSLIHVLLM). Over 164–196 (NELNFSRGTEIPHFFCELAQVLKVSNSDNHVNN) the chain is Extracellular. The N-linked (GlcNAc...) asparagine glycan is linked to Asn167. The helical transmembrane segment at 197–217 (VFMYVVTSLLGVIPMTGILMS) threads the bilayer. The Cytoplasmic segment spans residues 218-244 (YSQIFSSLFRMSSTVSKYKAFSTCGSH). Residues 245 to 265 (LCVVTLFYGSGFGVYFSSSVV) form a helical membrane-spanning segment. Topologically, residues 266-271 (HSTQRR) are extracellular. Residues 272–292 (KVASLMYTVISPMLNPFIYTL) form a helical membrane-spanning segment. Over 293–331 (RNKDVKGALGKLFNRVASSPSCINDIRNKLLLRSVRQIL) the chain is Cytoplasmic.

It belongs to the G-protein coupled receptor 1 family.

The protein localises to the cell membrane. Its function is as follows. Possible olfactory or taste receptor. In Mus musculus (Mouse), this protein is Olfactory receptor 7D11.